An 874-amino-acid chain; its full sequence is MKTTSEIRQSFLDFFHSKGHTVVPSSSLVPENDPTLLFTNAGMNQFKDVFLGLEKRPYTRATTAQRCVRAGGKHNDLENVGYTARHHTFFEMMGNFSFGDYFKHDAIQFGWEYLTSPQWLGLPKEKLYVTVYETDDEAYDIWNKIVGVPTDHIIRIGDNKGAPYASDNFWAMGDTGPCGPCTEIFYDHGETFWGGLPGSPEEDGDRYIEVWNIVFMQFNRLADGTMEKLPKPSVDTGMGLERMTAVMQHVNSNYETDIFQTLIKEVAGLLNVTDLDNKSLRVVADHIRACSYLIADGVVPSNEGRGYVLRRIIRRAVRHGNLLGAKEAFFYKLVPTLATVMGHAGEVLTQKQAHIQKTLKAEEEQFARTLERGLALLEDALTKVENNTLSGEVAFKLYDTYGFPLDLTADVCREREITIDEAGFEAEMTAQRERAKASSNFGADYNNVIKVEGQTDFIGYDNLAAQATIVGLFSNGKAVDTIQSGESAVIILDQTPFYAEMGGQVGDSGLISTEICNFAVNDTQKYGQVFGHIGQLTSGSLSIGDKVTATVDATRRVAITANHSATHLLHSALREVLGDHVAQKGSLVSENILRFDFSQPEAISKSQLEEIERIVNRKIRENIQVTIETMDIESAKKKGAMALFGEKYGDVVRVVGMTEFSIELCGGTHVQRTGDIGLFKLVSEGAVAAGIRRVEAVTAETAIEWLHNQQKVLQQSAEFLKADSNSLVEKIQQLQDKAKRTEKELQQLKDKLAAQAGSELVKQANKINGVNVVVQKLENVEVKSLRTMVDDLKNQLESAIVVFGTVADEKVNLIVGVTKDLSSKVNAGELVGAMAQQVGGKGGGRADMAMAGGSEPQNLDNALKFAEEWIQAKL.

Zn(2+)-binding residues include histidine 563, histidine 567, cysteine 665, and histidine 669.

Belongs to the class-II aminoacyl-tRNA synthetase family. Zn(2+) is required as a cofactor.

The protein localises to the cytoplasm. It catalyses the reaction tRNA(Ala) + L-alanine + ATP = L-alanyl-tRNA(Ala) + AMP + diphosphate. Functionally, catalyzes the attachment of alanine to tRNA(Ala) in a two-step reaction: alanine is first activated by ATP to form Ala-AMP and then transferred to the acceptor end of tRNA(Ala). Also edits incorrectly charged Ser-tRNA(Ala) and Gly-tRNA(Ala) via its editing domain. This Actinobacillus pleuropneumoniae serotype 7 (strain AP76) protein is Alanine--tRNA ligase.